Reading from the N-terminus, the 306-residue chain is Triplex capsid protein 2 (306 aa).

Belongs to the herpesviridae TRX2 protein family. Interacts with TRX1 and major capisd protein/MCP.

The protein localises to the virion. It localises to the host nucleus. Its function is as follows. Structural component of the T=16 icosahedral capsid. The capsid is composed of pentamers and hexamers of major capsid protein/MCP, which are linked together by heterotrimers called triplexes. These triplexes are formed by a single molecule of triplex protein 1/TRX1 and two copies of triplex protein 2/TRX2. Additionally, TRX1 is required for efficient transport of TRX2 to the nucleus, which is the site of capsid assembly. The sequence is that of Triplex capsid protein 2 from Alcelaphine herpesvirus 1 (strain C500) (AlHV-1).